The sequence spans 128 residues: Phosphoribosyl-AMP cyclohydrolase (128 aa).

Position 94 (Asp-94) interacts with Mg(2+). Residue Cys-95 participates in Zn(2+) binding. Residues Asp-96 and Asp-98 each coordinate Mg(2+). Zn(2+) contacts are provided by Cys-111 and Cys-118.

Belongs to the PRA-CH family. In terms of assembly, homodimer. The cofactor is Mg(2+). Zn(2+) is required as a cofactor.

The protein resides in the cytoplasm. It carries out the reaction 1-(5-phospho-beta-D-ribosyl)-5'-AMP + H2O = 1-(5-phospho-beta-D-ribosyl)-5-[(5-phospho-beta-D-ribosylamino)methylideneamino]imidazole-4-carboxamide. The protein operates within amino-acid biosynthesis; L-histidine biosynthesis; L-histidine from 5-phospho-alpha-D-ribose 1-diphosphate: step 3/9. Functionally, catalyzes the hydrolysis of the adenine ring of phosphoribosyl-AMP. In Streptomyces coelicolor (strain ATCC BAA-471 / A3(2) / M145), this protein is Phosphoribosyl-AMP cyclohydrolase.